The following is a 78-amino-acid chain: Large ribosomal subunit protein bL28 (78 aa).

Belongs to the bacterial ribosomal protein bL28 family.

In Glaesserella parasuis serovar 5 (strain SH0165) (Haemophilus parasuis), this protein is Large ribosomal subunit protein bL28.